The chain runs to 174 residues: Shikimate kinase 2 (174 aa).

Position 12 to 17 (12 to 17 (GCGKTT)) interacts with ATP. Positions 16 and 32 each coordinate Mg(2+). Substrate contacts are provided by D34, R58, and G79. The segment at 112–126 (EAYPLADQRPTLTGR) is LID domain. Position 120 (R120) interacts with ATP. Position 139 (R139) interacts with substrate. ATP is bound at residue Q155.

This sequence belongs to the shikimate kinase family. AroL subfamily. Monomer. Mg(2+) serves as cofactor.

It is found in the cytoplasm. The catalysed reaction is shikimate + ATP = 3-phosphoshikimate + ADP + H(+). Its pathway is metabolic intermediate biosynthesis; chorismate biosynthesis; chorismate from D-erythrose 4-phosphate and phosphoenolpyruvate: step 5/7. Its function is as follows. Catalyzes the specific phosphorylation of the 3-hydroxyl group of shikimic acid using ATP as a cosubstrate. The protein is Shikimate kinase 2 of Erwinia tasmaniensis (strain DSM 17950 / CFBP 7177 / CIP 109463 / NCPPB 4357 / Et1/99).